Reading from the N-terminus, the 436-residue chain is NADH-quinone oxidoreductase subunit D 1 (436 aa).

This sequence belongs to the complex I 49 kDa subunit family. NDH-1 is composed of 14 different subunits. Subunits NuoB, C, D, E, F, and G constitute the peripheral sector of the complex.

It is found in the cell inner membrane. It carries out the reaction a quinone + NADH + 5 H(+)(in) = a quinol + NAD(+) + 4 H(+)(out). Functionally, NDH-1 shuttles electrons from NADH, via FMN and iron-sulfur (Fe-S) centers, to quinones in the respiratory chain. The immediate electron acceptor for the enzyme in this species is believed to be ubiquinone. Couples the redox reaction to proton translocation (for every two electrons transferred, four hydrogen ions are translocated across the cytoplasmic membrane), and thus conserves the redox energy in a proton gradient. This Stenotrophomonas maltophilia (strain R551-3) protein is NADH-quinone oxidoreductase subunit D 1.